The primary structure comprises 285 residues: Putative sugar uptake protein lp_2503 (285 aa).

The next 9 helical transmembrane spans lie at 2–21 (GILIALIPAIAWGSIGLISG), 31–48 (TLGMTMGALVFGLALWAV), 55–72 (SKIWLIGIVSGLFWSIGQ), 112–134 (GNMYWIGSASVIVLIAGAVLTSL), 147–169 (NWGVGIRALILSTIGYAGYTIVV), 179–196 (VVMPQAVGMLLGALIWSF), 209–228 (NIVTGLVWGIGNLFMFMAMA), 233–255 (AVAYSLSQMGIVISTFGSIYLLG), and 264–283 (VYVVIGSILVIVGGVALSLM).

The protein belongs to the GRP transporter (TC 2.A.7.5) family.

Its subcellular location is the cell membrane. The polypeptide is Putative sugar uptake protein lp_2503 (Lactiplantibacillus plantarum (strain ATCC BAA-793 / NCIMB 8826 / WCFS1) (Lactobacillus plantarum)).